Consider the following 532-residue polypeptide: CTP synthase (532 aa).

The amidoligase domain stretch occupies residues Met1–Leu267. A CTP-binding site is contributed by Ser13. Residue Ser13 coordinates UTP. Gly14–Ile19 contacts ATP. Tyr54 contributes to the L-glutamine binding site. Residue Asp71 participates in ATP binding. Mg(2+)-binding residues include Asp71 and Glu141. CTP contacts are provided by residues Asp148–Glu150, Lys188–Gln193, and Lys224. UTP contacts are provided by residues Lys188–Gln193 and Lys224. One can recognise a Glutamine amidotransferase type-1 domain in the interval Glu292–Lys532. Gly354 provides a ligand contact to L-glutamine. Catalysis depends on Cys381, which acts as the Nucleophile; for glutamine hydrolysis. L-glutamine-binding positions include Leu382–Gln385, Glu405, and Arg461. Residues His506 and Glu508 contribute to the active site.

Belongs to the CTP synthase family. As to quaternary structure, homotetramer.

The catalysed reaction is UTP + L-glutamine + ATP + H2O = CTP + L-glutamate + ADP + phosphate + 2 H(+). It carries out the reaction L-glutamine + H2O = L-glutamate + NH4(+). The enzyme catalyses UTP + NH4(+) + ATP = CTP + ADP + phosphate + 2 H(+). The protein operates within pyrimidine metabolism; CTP biosynthesis via de novo pathway; CTP from UDP: step 2/2. Its activity is regulated as follows. Allosterically activated by GTP, when glutamine is the substrate; GTP has no effect on the reaction when ammonia is the substrate. The allosteric effector GTP functions by stabilizing the protein conformation that binds the tetrahedral intermediate(s) formed during glutamine hydrolysis. Inhibited by the product CTP, via allosteric rather than competitive inhibition. Catalyzes the ATP-dependent amination of UTP to CTP with either L-glutamine or ammonia as the source of nitrogen. Regulates intracellular CTP levels through interactions with the four ribonucleotide triphosphates. This chain is CTP synthase, found in Mycoplasma mycoides subsp. mycoides SC (strain CCUG 32753 / NCTC 10114 / PG1).